A 249-amino-acid polypeptide reads, in one-letter code: Aquaporin TIP4-3 (249 aa).

The next 2 helical transmembrane spans lie at 20 to 40 (GVLG…GAAM) and 56 to 76 (TAVA…GFHI). The short motif at 82–84 (NPA) is the NPA 1 element. A run of 3 helical transmembrane segments spans residues 100 to 122 (SSLY…RWLT), 141 to 161 (GVVA…ATIL), and 169 to 189 (GAGP…GAAL). The NPA 2 motif lies at 195–197 (NPA). A helical membrane pass occupies residues 214–234 (VYWVGPLAGGPLAVLVYECCF).

This sequence belongs to the MIP/aquaporin (TC 1.A.8) family. TIP (TC 1.A.8.10) subfamily.

The protein resides in the vacuole membrane. Functionally, aquaporins facilitate the transport of water and small neutral solutes across cell membranes. This chain is Aquaporin TIP4-3 (TIP4-3), found in Zea mays (Maize).